A 468-amino-acid chain; its full sequence is Acetyl-CoA decarbonylase/synthase complex subunit gamma 2 (468 aa).

The 4Fe-4S domain maps to 1–60 (MKINSPLEAYKYLPQTNCGECGEATCMAFASKLIDRSGKPTQCPPLVKEKKFAKKLAELE). Positions 18, 21, 26, and 43 each coordinate [4Fe-4S] cluster.

In terms of assembly, heterodimer of delta and gamma chains. The ACDS complex is made up of alpha, epsilon, beta, gamma and delta chains with a probable stoichiometry of (alpha(2)epsilon(2))(4)-beta(8)-(gamma(1)delta(1))(8). Corrinoid serves as cofactor. Requires [4Fe-4S] cluster as cofactor.

The catalysed reaction is 5,6,7,8-tetrahydrosarcinapterin + methyl-Co(III)-[corrinoid Fe-S protein] = 5-methyltetrahydrosarcinapterin + Co(I)-[corrinoid Fe-S protein] + H(+). The protein operates within one-carbon metabolism; methanogenesis from acetate. Functionally, part of a complex that catalyzes the reversible cleavage of acetyl-CoA, allowing growth on acetate as sole source of carbon and energy. In Methanosarcina thermophila, this protein is Acetyl-CoA decarbonylase/synthase complex subunit gamma 2.